Consider the following 358-residue polypeptide: Peptide chain release factor 1 (358 aa).

Position 236 is an N5-methylglutamine (glutamine 236).

Belongs to the prokaryotic/mitochondrial release factor family. Methylated by PrmC. Methylation increases the termination efficiency of RF1.

It is found in the cytoplasm. In terms of biological role, peptide chain release factor 1 directs the termination of translation in response to the peptide chain termination codons UAG and UAA. This chain is Peptide chain release factor 1, found in Corynebacterium efficiens (strain DSM 44549 / YS-314 / AJ 12310 / JCM 11189 / NBRC 100395).